The chain runs to 79 residues: U-actitoxin-Avd9d (79 aa).

Positions 1–19 (NLKVLAVFVLCAILVVVTA) are cleaved as a signal peptide. A propeptide spanning residues 20-37 (ERRGTETGGYKKDTLEDL) is cleaved from the precursor. The region spanning 44-79 (CFDSFKEATCHMAKTNRLCKTSAKYQINCKKTCGLC) is the ShKT domain. Disulfide bonds link Cys44–Cys79, Cys53–Cys72, and Cys62–Cys76. The crucial for binding to potassium channels stretch occupies residues 67 to 68 (KY).

It belongs to the sea anemone type 1 potassium channel toxin family. Type 1b subfamily.

It is found in the secreted. The protein localises to the nematocyst. In terms of biological role, inhibits voltage-gated potassium channels (Kv1/KCNA). The sequence is that of U-actitoxin-Avd9d from Anemonia viridis (Snakelocks anemone).